The sequence spans 434 residues: Gamma-glutamyl phosphate reductase (434 aa).

The protein belongs to the gamma-glutamyl phosphate reductase family.

Its subcellular location is the cytoplasm. It catalyses the reaction L-glutamate 5-semialdehyde + phosphate + NADP(+) = L-glutamyl 5-phosphate + NADPH + H(+). The protein operates within amino-acid biosynthesis; L-proline biosynthesis; L-glutamate 5-semialdehyde from L-glutamate: step 2/2. In terms of biological role, catalyzes the NADPH-dependent reduction of L-glutamate 5-phosphate into L-glutamate 5-semialdehyde and phosphate. The product spontaneously undergoes cyclization to form 1-pyrroline-5-carboxylate. This Pelotomaculum thermopropionicum (strain DSM 13744 / JCM 10971 / SI) protein is Gamma-glutamyl phosphate reductase.